A 53-amino-acid polypeptide reads, in one-letter code: Conotoxin Cal6.27 (53 aa).

Residues 1–24 (MKLTCVLIAAMLLLAVCQLDSADA) form the signal peptide. Intrachain disulfides connect Cys-29/Cys-43, Cys-36/Cys-47, and Cys-42/Cys-51.

This sequence belongs to the conotoxin O1 superfamily. In terms of tissue distribution, expressed by the venom duct.

It localises to the secreted. Functionally, probable neurotoxin. The protein is Conotoxin Cal6.27 of Californiconus californicus (California cone).